A 207-amino-acid chain; its full sequence is Peptidyl-tRNA hydrolase (207 aa).

Tyr-14 serves as a coordination point for tRNA. His-19 (proton acceptor) is an active-site residue. TRNA contacts are provided by Tyr-64, Asn-66, and Asn-112.

Belongs to the PTH family. In terms of assembly, monomer.

The protein localises to the cytoplasm. The enzyme catalyses an N-acyl-L-alpha-aminoacyl-tRNA + H2O = an N-acyl-L-amino acid + a tRNA + H(+). Its function is as follows. Hydrolyzes ribosome-free peptidyl-tRNAs (with 1 or more amino acids incorporated), which drop off the ribosome during protein synthesis, or as a result of ribosome stalling. Functionally, catalyzes the release of premature peptidyl moieties from peptidyl-tRNA molecules trapped in stalled 50S ribosomal subunits, and thus maintains levels of free tRNAs and 50S ribosomes. The sequence is that of Peptidyl-tRNA hydrolase from Rhodopseudomonas palustris (strain BisB5).